Consider the following 96-residue polypeptide: Aspartyl/glutamyl-tRNA(Asn/Gln) amidotransferase subunit C (96 aa).

It belongs to the GatC family. Heterotrimer of A, B and C subunits.

It catalyses the reaction L-glutamyl-tRNA(Gln) + L-glutamine + ATP + H2O = L-glutaminyl-tRNA(Gln) + L-glutamate + ADP + phosphate + H(+). It carries out the reaction L-aspartyl-tRNA(Asn) + L-glutamine + ATP + H2O = L-asparaginyl-tRNA(Asn) + L-glutamate + ADP + phosphate + 2 H(+). Allows the formation of correctly charged Asn-tRNA(Asn) or Gln-tRNA(Gln) through the transamidation of misacylated Asp-tRNA(Asn) or Glu-tRNA(Gln) in organisms which lack either or both of asparaginyl-tRNA or glutaminyl-tRNA synthetases. The reaction takes place in the presence of glutamine and ATP through an activated phospho-Asp-tRNA(Asn) or phospho-Glu-tRNA(Gln). The chain is Aspartyl/glutamyl-tRNA(Asn/Gln) amidotransferase subunit C from Chloroflexus aggregans (strain MD-66 / DSM 9485).